The sequence spans 279 residues: uncharacterized protein (279 aa).

Residues 233 to 279 (NDHQLHDSPLCSDVSDSTSNNNYDESLNFSNDNNNSSFNDFDDDNFI) form a disordered region. A compositionally biased stretch (polar residues) spans 246 to 259 (VSDSTSNNNYDESL). A compositionally biased stretch (low complexity) spans 260-271 (NFSNDNNNSSFN).

This is an uncharacterized protein from Buchnera aphidicola subsp. Baizongia pistaciae (strain Bp).